Reading from the N-terminus, the 376-residue chain is MESSRSLEHVLSMQGGEDDASYVKNCYGPAARLALSKPMLTTAINSIKLTEGCSSHLKIADLGCAIGDNTFSTVETVVEVLGKKLAVIDGGTEPEMEFEVFFSDLSSNDFNALFRSLDEKVNGSSRKYFAAGVPGSFYKRLFPKGELHVVVTMSALQWLSQVPEKVMEKGSKSWNKGGVWIEGAEKEVVEAYAEQADKDLVEFLKCRKEEIVVGGVLFMLMGGRPSGSVNQIGDPDSSLKHPFTTLMDQAWQDLVDEGLIEEEKRDGFNIPVYFRTTEEIAAAIDRCGGFKIEKTENLIIADHMNGKQEELMKDPDSYGRDRANYAQAGLKPIVQAYLGPDLTHKLFKRYAVRAAADKEILNNCFYHMIAVSAVRV.

S-adenosyl-L-homocysteine contacts are provided by Tyr22, Cys64, Asn69, Asp104, Leu105, Ser136, and Phe137. Residue Trp158 coordinates gibberellin A9. Mg(2+)-binding residues include Asn175, Val179, Arg265, Asp266, Phe268, and Asn269.

This sequence belongs to the methyltransferase superfamily. Type-7 methyltransferase family. SABATH subfamily. Mg(2+) serves as cofactor. As to expression, expressed in siliques, developing seeds, anthers and germinating seeds. Not detected in leaves, stems, flowers and roots.

The catalysed reaction is gibberellin A9 + S-adenosyl-L-methionine = O-methyl gibberellin A9 + S-adenosyl-L-homocysteine. Up-regulated by K(+) and NH(4+), down-regulated by Zn(2+), Cu(2+), Fe(2+) and Fe(3+). In terms of biological role, methylates the carboxyl group of several gibberellins (GAs). Substrate preference is GA9 &gt; GA20 &gt; GA3 &gt; GA4 &gt; GA34 &gt; GA51 &gt; GA1 &gt; GA19 &gt; GA12. No activity with diterpenes abietic acid and ent-kaurenoic acid. This chain is Gibberellic acid methyltransferase 1 (GAMT1), found in Arabidopsis thaliana (Mouse-ear cress).